Reading from the N-terminus, the 249-residue chain is Putative protein SNX29P2 (249 aa).

Disordered stretches follow at residues 109–171 (QVTN…SNSW) and 188–249 (DVKS…PGFK). Positions 156–170 (SPFGPNSNGSQSSNS) are enriched in low complexity. The segment covering 193-204 (DDEDVDENEDDV) has biased composition (acidic residues). Residues 226 to 242 (HSVTQAGVQWHDLSSLQ) are compositionally biased toward polar residues.

The protein belongs to the sorting nexin family.

This chain is Putative protein SNX29P2 (SNX29P2), found in Homo sapiens (Human).